We begin with the raw amino-acid sequence, 553 residues long: uncharacterized protein (553 aa).

Positions 1–28 (MRYARHASRYSLFTLAVSAALLPGAGWA) are cleaved as a signal peptide.

This is an uncharacterized protein from Pseudomonas aeruginosa (strain ATCC 15692 / DSM 22644 / CIP 104116 / JCM 14847 / LMG 12228 / 1C / PRS 101 / PAO1).